The chain runs to 231 residues: MSESSYGLTTFSPSGRLVQIEYATTAASKGTTALGVKATDGVVIAAEKKTTSPLADSLTLHKVFALDDHVGCTYSGIGPDCRVLVDAARRACQRYRLTYHEPMPISQLVRQISFLFQEFTQSGGVRPFGCSLLVAGADSRGNHLYQLDPSGTFWTWKATSIGKGSPDARTFLEKRYTNEMEIEDAVHTALLTLKEGFDGRMTAENTQVGRVVEGRFELLTVEQLKDYLDQI.

Belongs to the peptidase T1A family. As to quaternary structure, the 26S proteasome consists of a 20S proteasome core and two 19S regulatory subunits. The 20S proteasome core is composed of 28 subunits that are arranged in four stacked rings, resulting in a barrel-shaped structure. The two end rings are each formed by seven alpha subunits, and the two central rings are each formed by seven beta subunits. The catalytic chamber with the active sites is on the inside of the barrel.

Its subcellular location is the cytoplasm. It localises to the nucleus. The proteasome is a multicatalytic proteinase complex which is characterized by its ability to cleave peptides with Arg, Phe, Tyr, Leu, and Glu adjacent to the leaving group at neutral or slightly basic pH. The proteasome has an ATP-dependent proteolytic activity. This is Proteasome subunit alpha type-2 from Trypanosoma brucei brucei.